A 251-amino-acid polypeptide reads, in one-letter code: MLGTCLRLLVGVLCTVCSLGTARAYPDTSPLLGSNWGSLTHLYTATARTSYHLQIHRDGHVDGTPHQTIYSALMITSEDAGSVVITGAMTRRFLCMDLHGNIFGSLHFSPENCKFRQWTLENGYDVYLSQKHHYLVSLGRAKRIFQPGTNPPPFSQFLARRNEVPLLHFYTVRPRRHTRSAEDPPERDPLNVLKPRPRATPVPVSCSRELPSAEEGGPAASDPLGVLRRGRGDARGGAGGADRCRPFPRFV.

Positions 1 to 24 (MLGTCLRLLVGVLCTVCSLGTARA) are cleaved as a signal peptide. Residues Cys-95 and Cys-113 are joined by a disulfide bond. Thr-171 and Thr-178 each carry an O-linked (GalNAc) threonine glycan. Positions 175–251 (RRHTRSAEDP…DRCRPFPRFV (77 aa)) are disordered. Positions 179–189 (RSAEDPPERDP) are enriched in basic and acidic residues. Ser-180 bears the Phosphoserine; by FAM20C mark.

The protein belongs to the heparin-binding growth factors family. Interacts with FGFR1. Interacts with FGFR2, FGFR3 and FGFR4. Affinity between fibroblast growth factors (FGFs) and their receptors is increased by KL and heparan sulfate glycosaminoglycans that function as coreceptors. In terms of processing, following secretion this protein is inactivated by cleavage into a N-terminal fragment and a C-terminal fragment. The processing is effected by proprotein convertases. Post-translationally, O-glycosylated at Thr-171 and Thr-178 by GALNT3 and glycosylation of Thr-178 requires previous glycosylation at Thr171. Glycosylation is necessary for secretion; it blocks processing by proprotein convertases when the O-glycan is alpha 2,6-sialylated. Competition between proprotein convertase cleavage and block of cleavage by O-glycosylation determines the level of secreted active FGF23. Phosphorylation at Ser-180 mediated by FAM20C slows down glycosylation at Thr-178 notably. As to expression, mainly expressed in the brain and thymus at low levels. In brain; preferentially expressed in the ventrolateral thalamic nucleus.

It is found in the secreted. Its function is as follows. Regulator of phosphate homeostasis. Inhibits renal tubular phosphate transport by reducing SLC34A1 levels. Acts directly on the parathyroid to decrease PTH secretion. Regulator of vitamin-D metabolism. Negatively regulates osteoblasts differentiation and matrix mineralization. Up-regulates EGR1 expression in the presence of KL. In Mus musculus (Mouse), this protein is Fibroblast growth factor 23 (Fgf23).